A 295-amino-acid chain; its full sequence is uncharacterized protein (295 aa).

A compositionally biased stretch (basic residues) spans 1-13; it reads MRHSVARPTRLPR. 2 disordered regions span residues 1 to 111 and 183 to 295; these read MRHS…AGLS and TSAF…PRDS. A compositionally biased stretch (low complexity) spans 57-67; it reads AGPSAGAAARP. Pro residues predominate over residues 68–77; that stretch reads AAPPPQPREP. Basic and acidic residues-rich tracts occupy residues 245-257 and 280-295; these read LRPK…DRRP and GEPH…PRDS.

This is an uncharacterized protein from Homo sapiens (Human).